We begin with the raw amino-acid sequence, 161 residues long: TM2 domain-containing protein DDB_G0278163 (161 aa).

The Cytoplasmic portion of the chain corresponds to 1–24; the sequence is MGHHHHHHGGSGHHHHHHHHGSGH. Residues 25-45 form a helical membrane-spanning segment; it reads YGGGAVLVTPIVTPVPVVYGS. Over 46-54 the chain is Extracellular; that stretch reads RSSSYCPKS. The region spanning 52 to 100 is the TM2 domain; it reads PKSMTVAYVLWFFFGILGFHRLYLGRVGTFFLYFFTAGVFGLGWLFDAF. The chain crosses the membrane as a helical span at residues 55–75; that stretch reads MTVAYVLWFFFGILGFHRLYL. The Cytoplasmic portion of the chain corresponds to 76–80; that stretch reads GRVGT. A helical membrane pass occupies residues 81–101; the sequence is FFLYFFTAGVFGLGWLFDAFY. The Extracellular portion of the chain corresponds to 102–161; sequence THKMVKHYNECEFTKSCVGQSPPATIPIYQSEGAYPTYQQVPQQPPQFYQPQQQQPQYQP. The disordered stretch occupies residues 139 to 161; it reads YQQVPQQPPQFYQPQQQQPQYQP.

The protein belongs to the TM2 family.

It localises to the membrane. This chain is TM2 domain-containing protein DDB_G0278163, found in Dictyostelium discoideum (Social amoeba).